A 108-amino-acid chain; its full sequence is UPF0145 protein HDEF_1024 (108 aa).

It belongs to the UPF0145 family.

The sequence is that of UPF0145 protein HDEF_1024 from Hamiltonella defensa subsp. Acyrthosiphon pisum (strain 5AT).